The primary structure comprises 283 residues: MISITSIQQLRLHLAEEKRKNHSVGFVPTMGALHRGHISLIKQAKAENTVCVASIFVNPLQFNNPEDFNKYPIQRESDMKLMSEAGCDILFMPDVAEFYPTRPNMKIDIGLLDQILEGAHRPGHFSGVAIVVSKLFHIIEPGKAYFGQKDIQQVAVIRQLVSELNFPIEIIACPIIREESGLAMSSRNMRLSAQGKAVAANIYKALSVIEKQIKQDKVTVSDAQHAGKNYLNQFKEIEVEYLEIVAADTLEAITEYADQTKIAVCIAAYVEGVRLIDNLVIIL.

30 to 37 (MGALHRGH) contributes to the ATP binding site. His37 serves as the catalytic Proton donor. Gln61 is a (R)-pantoate binding site. Gln61 is a beta-alanine binding site. 147–150 (GQKD) is a binding site for ATP. Gln153 serves as a coordination point for (R)-pantoate. Residues Ile176 and 184-187 (MSSR) each bind ATP.

It belongs to the pantothenate synthetase family. In terms of assembly, homodimer.

It localises to the cytoplasm. It carries out the reaction (R)-pantoate + beta-alanine + ATP = (R)-pantothenate + AMP + diphosphate + H(+). It functions in the pathway cofactor biosynthesis; (R)-pantothenate biosynthesis; (R)-pantothenate from (R)-pantoate and beta-alanine: step 1/1. Catalyzes the condensation of pantoate with beta-alanine in an ATP-dependent reaction via a pantoyl-adenylate intermediate. The chain is Pantothenate synthetase from Cytophaga hutchinsonii (strain ATCC 33406 / DSM 1761 / CIP 103989 / NBRC 15051 / NCIMB 9469 / D465).